The sequence spans 405 residues: Phosphoglycerate kinase (405 aa).

Substrate-binding positions include aspartate 24 to asparagine 26, arginine 40, histidine 63 to arginine 66, arginine 122, and arginine 162. ATP is bound by residues lysine 212, glutamate 331, and glycine 361–serine 364.

The protein belongs to the phosphoglycerate kinase family. As to quaternary structure, monomer.

It localises to the cytoplasm. It catalyses the reaction (2R)-3-phosphoglycerate + ATP = (2R)-3-phospho-glyceroyl phosphate + ADP. Its pathway is carbohydrate degradation; glycolysis; pyruvate from D-glyceraldehyde 3-phosphate: step 2/5. The chain is Phosphoglycerate kinase (pgk) from Corynebacterium glutamicum (strain ATCC 13032 / DSM 20300 / JCM 1318 / BCRC 11384 / CCUG 27702 / LMG 3730 / NBRC 12168 / NCIMB 10025 / NRRL B-2784 / 534).